The primary structure comprises 283 residues: Shikimate dehydrogenase (NADP(+)) (283 aa).

Shikimate is bound by residues 19–21 and Thr66; that span reads SLS. Lys70 (proton acceptor) is an active-site residue. Shikimate-binding residues include Asn91 and Asp106. Residues 129-133, 153-158, and Leu224 each bind NADP(+); these read GAGGA and NRTPEK. Tyr226 contacts shikimate. Gly247 contacts NADP(+).

Belongs to the shikimate dehydrogenase family. As to quaternary structure, homodimer.

The catalysed reaction is shikimate + NADP(+) = 3-dehydroshikimate + NADPH + H(+). It functions in the pathway metabolic intermediate biosynthesis; chorismate biosynthesis; chorismate from D-erythrose 4-phosphate and phosphoenolpyruvate: step 4/7. In terms of biological role, involved in the biosynthesis of the chorismate, which leads to the biosynthesis of aromatic amino acids. Catalyzes the reversible NADPH linked reduction of 3-dehydroshikimate (DHSA) to yield shikimate (SA). This is Shikimate dehydrogenase (NADP(+)) from Methanothermobacter thermautotrophicus (strain ATCC 29096 / DSM 1053 / JCM 10044 / NBRC 100330 / Delta H) (Methanobacterium thermoautotrophicum).